Here is a 157-residue protein sequence, read N- to C-terminus: S-ribosylhomocysteine lyase (157 aa).

Residues H54, H58, and C126 each contribute to the Fe cation site.

It belongs to the LuxS family. Homodimer. Requires Fe cation as cofactor.

It carries out the reaction S-(5-deoxy-D-ribos-5-yl)-L-homocysteine = (S)-4,5-dihydroxypentane-2,3-dione + L-homocysteine. Involved in the synthesis of autoinducer 2 (AI-2) which is secreted by bacteria and is used to communicate both the cell density and the metabolic potential of the environment. The regulation of gene expression in response to changes in cell density is called quorum sensing. Catalyzes the transformation of S-ribosylhomocysteine (RHC) to homocysteine (HC) and 4,5-dihydroxy-2,3-pentadione (DPD). The chain is S-ribosylhomocysteine lyase from Bacillus cereus (strain 03BB102).